Here is a 507-residue protein sequence, read N- to C-terminus: GMP synthase [glutamine-hydrolyzing] (507 aa).

One can recognise a Glutamine amidotransferase type-1 domain in the interval 3-190; sequence KILVIDYGSQ…IQGICGLKGS (188 aa). The active-site Nucleophile is C77. Active-site residues include H164 and E166. Residues 191–382 form the GMPS ATP-PPase domain; the sequence is WTLMDFVENK…LGLPREILYR (192 aa). 218-224 provides a ligand contact to ATP; sequence SGGVDSS.

As to quaternary structure, homodimer.

The enzyme catalyses XMP + L-glutamine + ATP + H2O = GMP + L-glutamate + AMP + diphosphate + 2 H(+). Its pathway is purine metabolism; GMP biosynthesis; GMP from XMP (L-Gln route): step 1/1. Catalyzes the synthesis of GMP from XMP. The protein is GMP synthase [glutamine-hydrolyzing] of Petrotoga mobilis (strain DSM 10674 / SJ95).